Here is a 227-residue protein sequence, read N- to C-terminus: Enolase-phosphatase E1 (227 aa).

Belongs to the HAD-like hydrolase superfamily. MasA/MtnC family. In terms of assembly, monomer. It depends on Mg(2+) as a cofactor.

It carries out the reaction 5-methylsulfanyl-2,3-dioxopentyl phosphate + H2O = 1,2-dihydroxy-5-(methylsulfanyl)pent-1-en-3-one + phosphate. It functions in the pathway amino-acid biosynthesis; L-methionine biosynthesis via salvage pathway; L-methionine from S-methyl-5-thio-alpha-D-ribose 1-phosphate: step 3/6. Its pathway is amino-acid biosynthesis; L-methionine biosynthesis via salvage pathway; L-methionine from S-methyl-5-thio-alpha-D-ribose 1-phosphate: step 4/6. Functionally, bifunctional enzyme that catalyzes the enolization of 2,3-diketo-5-methylthiopentyl-1-phosphate (DK-MTP-1-P) into the intermediate 2-hydroxy-3-keto-5-methylthiopentenyl-1-phosphate (HK-MTPenyl-1-P), which is then dephosphorylated to form the acireductone 1,2-dihydroxy-3-keto-5-methylthiopentene (DHK-MTPene). The protein is Enolase-phosphatase E1 of Persephonella marina (strain DSM 14350 / EX-H1).